Reading from the N-terminus, the 461-residue chain is Photosystem II CP43 reaction center protein (461 aa).

A propeptide spanning residues methionine 1–glutamate 2 is cleaved from the precursor. Threonine 3 carries the post-translational modification N-acetylthreonine. Threonine 3 is modified (phosphothreonine). 5 consecutive transmembrane segments (helical) span residues leucine 57–alanine 81, leucine 122–asparagine 143, lysine 166–threonine 188, threonine 243–serine 263, and tryptophan 279–serine 300. Residue glutamate 355 coordinates [CaMn4O5] cluster. A helical transmembrane segment spans residues arginine 435–proline 459.

This sequence belongs to the PsbB/PsbC family. PsbC subfamily. PSII is composed of 1 copy each of membrane proteins PsbA, PsbB, PsbC, PsbD, PsbE, PsbF, PsbH, PsbI, PsbJ, PsbK, PsbL, PsbM, PsbT, PsbX, PsbY, PsbZ, Psb30/Ycf12, at least 3 peripheral proteins of the oxygen-evolving complex and a large number of cofactors. It forms dimeric complexes. It depends on Binds multiple chlorophylls and provides some of the ligands for the Ca-4Mn-5O cluster of the oxygen-evolving complex. It may also provide a ligand for a Cl- that is required for oxygen evolution. PSII binds additional chlorophylls, carotenoids and specific lipids. as a cofactor.

It is found in the plastid. The protein localises to the chloroplast thylakoid membrane. Its function is as follows. One of the components of the core complex of photosystem II (PSII). It binds chlorophyll and helps catalyze the primary light-induced photochemical processes of PSII. PSII is a light-driven water:plastoquinone oxidoreductase, using light energy to abstract electrons from H(2)O, generating O(2) and a proton gradient subsequently used for ATP formation. In Tetradesmus obliquus (Green alga), this protein is Photosystem II CP43 reaction center protein.